We begin with the raw amino-acid sequence, 695 residues long: Putative ATP-dependent DNA helicase R568 (695 aa).

Positions 86 to 499 constitute a UvrD-like helicase ATP-binding domain; that stretch reads KFSEEQIKYI…FRNEEIFDSN (414 aa). 107-114 lines the ATP pocket; the sequence is ACAGSGKT.

This sequence belongs to the helicase family. UvrD subfamily.

The catalysed reaction is Couples ATP hydrolysis with the unwinding of duplex DNA by translocating in the 3'-5' direction.. It carries out the reaction ATP + H2O = ADP + phosphate + H(+). Its function is as follows. ATP-dependent DNA helicase. This chain is Putative ATP-dependent DNA helicase R568, found in Acanthamoeba polyphaga mimivirus (APMV).